Consider the following 287-residue polypeptide: Undecaprenyl-diphosphatase (287 aa).

7 helical membrane-spanning segments follow: residues 6–26 (LYLIKAFFLGIIEGLTEFIPV), 45–65 (SGKVFEVVIQFGSILAVMWIF), 85–105 (AFTRNLLLAFLPAAVVGAIFI), 111–131 (VFYHPGVVAVTLVLGGLIMLW), 204–224 (ATEFSFFLAMPTMLGAATYDL), 238–258 (AIAVGFAAAFISALVVVRAVL), and 265–285 (TYRGFAWYRIALGIVVAAWLM).

This sequence belongs to the UppP family.

The protein resides in the cell inner membrane. It catalyses the reaction di-trans,octa-cis-undecaprenyl diphosphate + H2O = di-trans,octa-cis-undecaprenyl phosphate + phosphate + H(+). In terms of biological role, catalyzes the dephosphorylation of undecaprenyl diphosphate (UPP). Confers resistance to bacitracin. This Bordetella petrii (strain ATCC BAA-461 / DSM 12804 / CCUG 43448) protein is Undecaprenyl-diphosphatase.